The sequence spans 95 residues: Small ribosomal subunit protein bS6 (95 aa).

Belongs to the bacterial ribosomal protein bS6 family.

Its function is as follows. Binds together with bS18 to 16S ribosomal RNA. This is Small ribosomal subunit protein bS6 from Exiguobacterium sibiricum (strain DSM 17290 / CCUG 55495 / CIP 109462 / JCM 13490 / 255-15).